We begin with the raw amino-acid sequence, 384 residues long: Chaperone protein DnaJ (384 aa).

The region spanning 5–70 is the J domain; the sequence is DFYEVLGVSK…DKKAAYDRYG (66 aa). The CR-type zinc finger occupies 143 to 221; sequence GAQKTITVPG…CHGSGRIEKE (79 aa). Zn(2+) is bound by residues cysteine 156, cysteine 159, cysteine 173, cysteine 176, cysteine 195, cysteine 198, cysteine 209, and cysteine 212. CXXCXGXG motif repeat units follow at residues 156–163, 173–180, 195–202, and 209–216; these read CGSCNGTG, CPTCSGLG, CPTCGGQG, and CRVCHGSG.

The protein belongs to the DnaJ family. In terms of assembly, homodimer. Zn(2+) is required as a cofactor.

Its subcellular location is the cytoplasm. In terms of biological role, participates actively in the response to hyperosmotic and heat shock by preventing the aggregation of stress-denatured proteins and by disaggregating proteins, also in an autonomous, DnaK-independent fashion. Unfolded proteins bind initially to DnaJ; upon interaction with the DnaJ-bound protein, DnaK hydrolyzes its bound ATP, resulting in the formation of a stable complex. GrpE releases ADP from DnaK; ATP binding to DnaK triggers the release of the substrate protein, thus completing the reaction cycle. Several rounds of ATP-dependent interactions between DnaJ, DnaK and GrpE are required for fully efficient folding. Also involved, together with DnaK and GrpE, in the DNA replication of plasmids through activation of initiation proteins. The protein is Chaperone protein DnaJ of Rhodobacter capsulatus (Rhodopseudomonas capsulata).